The chain runs to 267 residues: Large ribosomal subunit protein uL4 (267 aa).

This sequence belongs to the universal ribosomal protein uL4 family. In terms of assembly, part of the 50S ribosomal subunit.

Functionally, one of the primary rRNA binding proteins, this protein initially binds near the 5'-end of the 23S rRNA. It is important during the early stages of 50S assembly. It makes multiple contacts with different domains of the 23S rRNA in the assembled 50S subunit and ribosome. Its function is as follows. Forms part of the polypeptide exit tunnel. The sequence is that of Large ribosomal subunit protein uL4 from Saccharolobus islandicus (strain M.16.27) (Sulfolobus islandicus).